The following is a 338-amino-acid chain: Glycerol-3-phosphate dehydrogenase [NAD(P)+] 1 (338 aa).

NADPH is bound by residues Ser11, Trp12, His32, Arg33, and Lys109. Sn-glycerol 3-phosphate is bound by residues Lys109, Gly140, and Ser142. Residue Ala144 coordinates NADPH. 5 residues coordinate sn-glycerol 3-phosphate: Lys195, Asp248, Ser258, Arg259, and Asn260. Catalysis depends on Lys195, which acts as the Proton acceptor. Arg259 lines the NADPH pocket. NADPH contacts are provided by Val283 and Glu285.

It belongs to the NAD-dependent glycerol-3-phosphate dehydrogenase family.

It is found in the cytoplasm. The catalysed reaction is sn-glycerol 3-phosphate + NAD(+) = dihydroxyacetone phosphate + NADH + H(+). It carries out the reaction sn-glycerol 3-phosphate + NADP(+) = dihydroxyacetone phosphate + NADPH + H(+). It functions in the pathway membrane lipid metabolism; glycerophospholipid metabolism. In terms of biological role, catalyzes the reduction of the glycolytic intermediate dihydroxyacetone phosphate (DHAP) to sn-glycerol 3-phosphate (G3P), the key precursor for phospholipid synthesis. In Lactobacillus delbrueckii subsp. bulgaricus (strain ATCC 11842 / DSM 20081 / BCRC 10696 / JCM 1002 / NBRC 13953 / NCIMB 11778 / NCTC 12712 / WDCM 00102 / Lb 14), this protein is Glycerol-3-phosphate dehydrogenase [NAD(P)+] 1.